The primary structure comprises 310 residues: MNGSNLRRGTFTILLALCATPWVGTAQALVMGIALGLLQANPWPRQTARYSKMLLQASVVGLGFGLSLGEVIQTGKDSIWYSVIGISCTLLVGYGLGKLFKTGTNTSALISFGTAICGGSAIAAMAPVLKAKSDETAVALATVFTLNSAALLLFPLVGHWLQLDQNTFGVWSGLAIHDTSSVVGATSAYGATALAIGTTVKLTRAIWIAPVVMAASLIKGGEQQARIPLFIIGFLGAAAIRTLLPSYEHFWGELAGVAKQCLVVTLFLVGAGLSREVVKQVGIRPLVQAVSLWVLVSALTLVALKLPWSA.

9 helical membrane passes run 11–33 (FTIL…VMGI), 53–72 (MLLQ…GEVI), 79–97 (IWYS…YGLG), 107–129 (SALI…APVL), 136–158 (TAVA…PLVG), 193–215 (ALAI…VMAA), 227–244 (IPLF…RTLL), 254–273 (LAGV…GAGL), and 286–308 (LVQA…KLPW).

It belongs to the UPF0324 family.

Its subcellular location is the cell membrane. In Geobacter sulfurreducens (strain ATCC 51573 / DSM 12127 / PCA), this protein is UPF0324 membrane protein GSU2818.